A 123-amino-acid polypeptide reads, in one-letter code: DPEP2 neighbor protein (123 aa).

Residues 67 to 123 are disordered; that stretch reads APLATPTKAEAEKPAPRRAPKRRQATIESDKDLGCSSPKIRRLEHRGRRLTPQKLAG. Over residues 105 to 117 the composition is skewed to basic residues; the sequence is KIRRLEHRGRRLT.

The chain is DPEP2 neighbor protein from Homo sapiens (Human).